A 359-amino-acid polypeptide reads, in one-letter code: Phospho-N-acetylmuramoyl-pentapeptide-transferase (359 aa).

A run of 10 helical transmembrane segments spans residues 3–23 (QILV…PALI), 55–75 (VAIV…GLAF), 80–100 (VSAS…VGFL), 117–137 (TAKT…VLQF), 156–176 (IATV…IVSA), 187–207 (LDGL…LITF), 231–251 (LTLI…WNAA), 255–275 (IFMG…LSVT), 280–300 (ILAV…VLQI), and 334–354 (FWLL…GEWL).

Belongs to the glycosyltransferase 4 family. MraY subfamily. Mg(2+) is required as a cofactor.

Its subcellular location is the cell membrane. It carries out the reaction UDP-N-acetyl-alpha-D-muramoyl-L-alanyl-gamma-D-glutamyl-meso-2,6-diaminopimeloyl-D-alanyl-D-alanine + di-trans,octa-cis-undecaprenyl phosphate = di-trans,octa-cis-undecaprenyl diphospho-N-acetyl-alpha-D-muramoyl-L-alanyl-D-glutamyl-meso-2,6-diaminopimeloyl-D-alanyl-D-alanine + UMP. The protein operates within cell wall biogenesis; peptidoglycan biosynthesis. Its function is as follows. Catalyzes the initial step of the lipid cycle reactions in the biosynthesis of the cell wall peptidoglycan: transfers peptidoglycan precursor phospho-MurNAc-pentapeptide from UDP-MurNAc-pentapeptide onto the lipid carrier undecaprenyl phosphate, yielding undecaprenyl-pyrophosphoryl-MurNAc-pentapeptide, known as lipid I. The chain is Phospho-N-acetylmuramoyl-pentapeptide-transferase from Mycobacterium leprae (strain TN).